We begin with the raw amino-acid sequence, 96 residues long: UPF0729 protein AGAP000931 (96 aa).

The interval 65 to 96 (VPPGHDPVGPTVAADTATSDAVDDAASSKKTL) is disordered. Over residues 75-96 (TVAADTATSDAVDDAASSKKTL) the composition is skewed to low complexity.

The protein belongs to the UPF0729 family.

The chain is UPF0729 protein AGAP000931 from Anopheles gambiae (African malaria mosquito).